A 236-amino-acid polypeptide reads, in one-letter code: 5'-methylthioadenosine/S-adenosylhomocysteine nucleosidase (236 aa).

E12 serves as the catalytic Proton acceptor. Residues G78, I153, and 174 to 175 contribute to the substrate site; that span reads ME. The Proton donor role is filled by D198.

The protein belongs to the PNP/UDP phosphorylase family. MtnN subfamily.

The catalysed reaction is S-adenosyl-L-homocysteine + H2O = S-(5-deoxy-D-ribos-5-yl)-L-homocysteine + adenine. The enzyme catalyses S-methyl-5'-thioadenosine + H2O = 5-(methylsulfanyl)-D-ribose + adenine. It catalyses the reaction 5'-deoxyadenosine + H2O = 5-deoxy-D-ribose + adenine. It participates in amino-acid biosynthesis; L-methionine biosynthesis via salvage pathway; S-methyl-5-thio-alpha-D-ribose 1-phosphate from S-methyl-5'-thioadenosine (hydrolase route): step 1/2. Its function is as follows. Catalyzes the irreversible cleavage of the glycosidic bond in both 5'-methylthioadenosine (MTA) and S-adenosylhomocysteine (SAH/AdoHcy) to adenine and the corresponding thioribose, 5'-methylthioribose and S-ribosylhomocysteine, respectively. Also cleaves 5'-deoxyadenosine, a toxic by-product of radical S-adenosylmethionine (SAM) enzymes, into 5-deoxyribose and adenine. The polypeptide is 5'-methylthioadenosine/S-adenosylhomocysteine nucleosidase (Shewanella baltica (strain OS155 / ATCC BAA-1091)).